Reading from the N-terminus, the 356-residue chain is MSGKELRYGFTTGACAAAAVKAAAQMLRDQGMVHEVELMLPCGIGASFQVHGGVLRDNTASCYVVKDAGDDPDVTNGAEIHVTASIEFFTKNRIVIEGGTGIGRVTKPGLAVPVGEWAINPVPRSMILEVVKEVFALRCIPATLTFNISIPNGEELAKKTLNERLGIVGGLSILGTTGIVKPISAKAWTDTVDASVDVALACGARTVVLATGRSSEIVAQKHLALSEEAFVMMGDHFGYAMRSCASKEVPEVVVAGQFAKLVKIACGHEQTHVTSSQMDLDALAWWLREVPATAHLEQMAREANTARHLLEASGYNQAVIELVCSRVLKVCAEVAPWVKMRVMLAGYHGELLYFTP.

Belongs to the CbiD family.

It catalyses the reaction Co-precorrin-5B + S-adenosyl-L-methionine = Co-precorrin-6A + S-adenosyl-L-homocysteine. Its pathway is cofactor biosynthesis; adenosylcobalamin biosynthesis; cob(II)yrinate a,c-diamide from sirohydrochlorin (anaerobic route): step 6/10. Catalyzes the methylation of C-1 in cobalt-precorrin-5B to form cobalt-precorrin-6A. The polypeptide is Cobalt-precorrin-5B C(1)-methyltransferase (Citrifermentans bemidjiense (strain ATCC BAA-1014 / DSM 16622 / JCM 12645 / Bem) (Geobacter bemidjiensis)).